The sequence spans 335 residues: tRNA-dihydrouridine(20/20a) synthase (335 aa).

FMN is bound by residues 20-22 (PML) and Gln72. The active-site Proton donor is the Cys102. FMN is bound by residues Lys141, His173, 213-215 (NGG), and 235-236 (GR).

It belongs to the Dus family. DusA subfamily. FMN is required as a cofactor.

It carries out the reaction 5,6-dihydrouridine(20) in tRNA + NADP(+) = uridine(20) in tRNA + NADPH + H(+). The enzyme catalyses 5,6-dihydrouridine(20) in tRNA + NAD(+) = uridine(20) in tRNA + NADH + H(+). The catalysed reaction is 5,6-dihydrouridine(20a) in tRNA + NADP(+) = uridine(20a) in tRNA + NADPH + H(+). It catalyses the reaction 5,6-dihydrouridine(20a) in tRNA + NAD(+) = uridine(20a) in tRNA + NADH + H(+). Catalyzes the synthesis of 5,6-dihydrouridine (D), a modified base found in the D-loop of most tRNAs, via the reduction of the C5-C6 double bond in target uridines. Specifically modifies U20 and U20a in tRNAs. The chain is tRNA-dihydrouridine(20/20a) synthase from Shewanella oneidensis (strain ATCC 700550 / JCM 31522 / CIP 106686 / LMG 19005 / NCIMB 14063 / MR-1).